Reading from the N-terminus, the 266-residue chain is F-actin-capping protein subunit alpha (266 aa).

The protein belongs to the F-actin-capping protein alpha subunit family. As to quaternary structure, heterodimer of an alpha and a beta subunit.

Its subcellular location is the cytoplasm. It localises to the cytoskeleton. Its function is as follows. F-actin-capping proteins bind in a Ca(2+)-independent manner to the fast growing ends of actin filaments (barbed end) thereby blocking the exchange of subunits at these ends. Unlike other capping proteins (such as gelsolin and severin), these proteins do not sever actin filaments. The sequence is that of F-actin-capping protein subunit alpha (CAP1) from Debaryomyces hansenii (strain ATCC 36239 / CBS 767 / BCRC 21394 / JCM 1990 / NBRC 0083 / IGC 2968) (Yeast).